Reading from the N-terminus, the 887-residue chain is Alanine--tRNA ligase (887 aa).

Zn(2+) contacts are provided by His-563, His-567, Cys-677, and His-681.

This sequence belongs to the class-II aminoacyl-tRNA synthetase family. It depends on Zn(2+) as a cofactor.

It localises to the cytoplasm. It carries out the reaction tRNA(Ala) + L-alanine + ATP = L-alanyl-tRNA(Ala) + AMP + diphosphate. Catalyzes the attachment of alanine to tRNA(Ala) in a two-step reaction: alanine is first activated by ATP to form Ala-AMP and then transferred to the acceptor end of tRNA(Ala). Also edits incorrectly charged Ser-tRNA(Ala) and Gly-tRNA(Ala) via its editing domain. This is Alanine--tRNA ligase from Dinoroseobacter shibae (strain DSM 16493 / NCIMB 14021 / DFL 12).